A 271-amino-acid chain; its full sequence is Putative mitochondrial carrier protein PET8 (271 aa).

Solcar repeat units follow at residues 3 to 76, 91 to 177, and 187 to 270; these read STFL…MKQQ, AEVL…LKKK, and VSAW…VHSL. 6 helical membrane passes run 6–26, 51–71, 97–117, 152–168, 193–213, and 251–271; these read LASL…FFPI, GLGS…VTYD, MLSS…AEVI, GWWT…CIQF, AVCG…LDVL, and MWIS…HSLF.

Belongs to the mitochondrial carrier (TC 2.A.29) family.

Its subcellular location is the mitochondrion inner membrane. This Eremothecium gossypii (strain ATCC 10895 / CBS 109.51 / FGSC 9923 / NRRL Y-1056) (Yeast) protein is Putative mitochondrial carrier protein PET8 (PET8).